Consider the following 409-residue polypeptide: Tryptophan synthase beta chain (409 aa).

Lys95 carries the post-translational modification N6-(pyridoxal phosphate)lysine.

This sequence belongs to the TrpB family. Tetramer of two alpha and two beta chains. The cofactor is pyridoxal 5'-phosphate.

It carries out the reaction (1S,2R)-1-C-(indol-3-yl)glycerol 3-phosphate + L-serine = D-glyceraldehyde 3-phosphate + L-tryptophan + H2O. It functions in the pathway amino-acid biosynthesis; L-tryptophan biosynthesis; L-tryptophan from chorismate: step 5/5. Functionally, the beta subunit is responsible for the synthesis of L-tryptophan from indole and L-serine. In Pseudomonas syringae pv. syringae (strain B728a), this protein is Tryptophan synthase beta chain.